The sequence spans 249 residues: MVSFDATEALAPYREGRGYGAILFDRERLRQADASLFSPQSWGDRARPVDAGGRGGAWFVDAPFGHSVLRQYLRGGMAARVSRDRYLWKGAGRTRSFAEFRLMRELIKRKLPVPRPLAACYLREGLGYRAALLMERLENVRSLAEHAQVAGRGAPWEATGQLIARFHRAGLDHADLNAHNILFDAGGHGWLIDFDRGVLRIPATRWRERNLKRLHRSLLKLRGNRSREDVDKDYARLHRAYELAWGRGY.

D175 is an active-site residue.

This sequence belongs to the protein kinase superfamily. KdkA/RfaP family.

The protein resides in the cell inner membrane. The catalysed reaction is an alpha-Kdo-(2-&gt;6)-lipid IVA + ATP = a 4-O-phospho-alpha-Kdo-(2-&gt;6)-lipid IVA + ADP + H(+). Its pathway is bacterial outer membrane biogenesis; LPS core biosynthesis. In terms of biological role, catalyzes the ATP-dependent phosphorylation of the 3-deoxy-D-manno-octulosonic acid (Kdo) residue in Kdo-lipid IV(A) at the 4-OH position. In Xanthomonas axonopodis pv. citri (strain 306), this protein is 3-deoxy-D-manno-octulosonic acid kinase.